A 216-amino-acid chain; its full sequence is Endo-1,4-beta-xylanase 2 (216 aa).

The N-terminal stretch at 1–27 (MVSFSSLFVAACAAVTAFALPNELEKR) is a signal peptide. The GH11 domain maps to 28–216 (AITSNEQGTN…SSGSASITVS (189 aa)). Asparagine 87 is a glycosylation site (N-linked (GlcNAc...) asparagine). The active-site Nucleophile is glutamate 112. Glutamate 203 (proton donor) is an active-site residue.

This sequence belongs to the glycosyl hydrolase 11 (cellulase G) family.

The protein resides in the secreted. It catalyses the reaction Endohydrolysis of (1-&gt;4)-beta-D-xylosidic linkages in xylans.. It functions in the pathway glycan degradation; xylan degradation. Functionally, endo-1,4-beta-xylanase involved in the hydrolysis of xylan, a major structural heterogeneous polysaccharide found in plant biomass representing the second most abundant polysaccharide in the biosphere, after cellulose. This chain is Endo-1,4-beta-xylanase 2 (xyn2), found in Rhizopus oryzae (Mucormycosis agent).